We begin with the raw amino-acid sequence, 89 residues long: Small ribosomal subunit protein uS15 (89 aa).

Over residues Met1 to Asp21 the composition is skewed to basic and acidic residues. The interval Met1–Ser24 is disordered.

The protein belongs to the universal ribosomal protein uS15 family. In terms of assembly, part of the 30S ribosomal subunit. Forms a bridge to the 50S subunit in the 70S ribosome, contacting the 23S rRNA.

Its function is as follows. One of the primary rRNA binding proteins, it binds directly to 16S rRNA where it helps nucleate assembly of the platform of the 30S subunit by binding and bridging several RNA helices of the 16S rRNA. Forms an intersubunit bridge (bridge B4) with the 23S rRNA of the 50S subunit in the ribosome. The chain is Small ribosomal subunit protein uS15 from Ruegeria pomeroyi (strain ATCC 700808 / DSM 15171 / DSS-3) (Silicibacter pomeroyi).